A 396-amino-acid chain; its full sequence is NADH-quinone oxidoreductase subunit D 1 (396 aa).

Belongs to the complex I 49 kDa subunit family. In terms of assembly, NDH-1 is composed of 14 different subunits. Subunits NuoB, C, D, E, F, and G constitute the peripheral sector of the complex.

The protein localises to the cell inner membrane. The enzyme catalyses a quinone + NADH + 5 H(+)(in) = a quinol + NAD(+) + 4 H(+)(out). In terms of biological role, NDH-1 shuttles electrons from NADH, via FMN and iron-sulfur (Fe-S) centers, to quinones in the respiratory chain. The immediate electron acceptor for the enzyme in this species is believed to be ubiquinone. Couples the redox reaction to proton translocation (for every two electrons transferred, four hydrogen ions are translocated across the cytoplasmic membrane), and thus conserves the redox energy in a proton gradient. The sequence is that of NADH-quinone oxidoreductase subunit D 1 from Sinorhizobium medicae (strain WSM419) (Ensifer medicae).